The primary structure comprises 118 residues: Large ribosomal subunit protein uL18 (118 aa).

The protein belongs to the universal ribosomal protein uL18 family. As to quaternary structure, part of the 50S ribosomal subunit; part of the 5S rRNA/L5/L18/L25 subcomplex. Contacts the 5S and 23S rRNAs.

This is one of the proteins that bind and probably mediate the attachment of the 5S RNA into the large ribosomal subunit, where it forms part of the central protuberance. The sequence is that of Large ribosomal subunit protein uL18 from Parvibaculum lavamentivorans (strain DS-1 / DSM 13023 / NCIMB 13966).